The sequence spans 426 residues: Histidine--tRNA ligase (426 aa).

It belongs to the class-II aminoacyl-tRNA synthetase family. In terms of assembly, homodimer.

It is found in the cytoplasm. It carries out the reaction tRNA(His) + L-histidine + ATP = L-histidyl-tRNA(His) + AMP + diphosphate + H(+). The chain is Histidine--tRNA ligase from Streptococcus agalactiae serotype Ia (strain ATCC 27591 / A909 / CDC SS700).